Reading from the N-terminus, the 435-residue chain is Glutamate-1-semialdehyde 2,1-aminomutase (435 aa).

Lys-266 is subject to N6-(pyridoxal phosphate)lysine.

This sequence belongs to the class-III pyridoxal-phosphate-dependent aminotransferase family. HemL subfamily. In terms of assembly, homodimer. The cofactor is pyridoxal 5'-phosphate.

It localises to the cytoplasm. It carries out the reaction (S)-4-amino-5-oxopentanoate = 5-aminolevulinate. It participates in porphyrin-containing compound metabolism; protoporphyrin-IX biosynthesis; 5-aminolevulinate from L-glutamyl-tRNA(Glu): step 2/2. The sequence is that of Glutamate-1-semialdehyde 2,1-aminomutase from Coxiella burnetii (strain CbuK_Q154) (Coxiella burnetii (strain Q154)).